The following is a 199-amino-acid chain: Alkyl hydroperoxide reductase C (199 aa).

The 162-residue stretch at 2-163 (VLVTYPAPDF…TLRMIDALHF (162 aa)) folds into the Thioredoxin domain. Residue Cys50 is the Cysteine sulfenic acid (-SOH) intermediate of the active site.

It belongs to the peroxiredoxin family. AhpC/Prx1 subfamily. Homodimer; disulfide-linked, upon oxidation. 5 homodimers assemble to form a ring-like decamer.

The protein resides in the cytoplasm. It catalyses the reaction a hydroperoxide + NADH + H(+) = an alcohol + NAD(+) + H2O. Functionally, thiol-specific peroxidase that catalyzes the reduction of hydrogen peroxide and organic hydroperoxides to water and alcohols, respectively. Plays a role in cell protection against oxidative stress by detoxifying peroxides. The chain is Alkyl hydroperoxide reductase C from Buchnera aphidicola subsp. Baizongia pistaciae (strain Bp).